We begin with the raw amino-acid sequence, 1726 residues long: Transcription elongation factor SPT6 (1726 aa).

Composition is skewed to acidic residues over residues 1-18, 31-45, and 55-79; these read MSDF…EFEE, EEDE…EDQD, and DDDD…SDSG. Disordered stretches follow at residues 1–196, 219–248, and 482–512; these read MSDF…KGKK, AEFD…KKQT, and EVSE…QASR. Ser90 carries the phosphoserine modification. Over residues 93 to 104 the composition is skewed to acidic residues; the sequence is DYLDDDDLDLIE. Residues 110–120 show a composition bias toward basic residues; it reads KVKRRKKKYSR. Acidic residues-rich tracts occupy residues 146 to 157, 166 to 186, 219 to 240, and 484 to 501; these read GDGEGEVEDGEA, DEEE…DDDG, AEFD…DDES, and SEED…EEEE. Basic and acidic residues predominate over residues 502–512; it reads QKGPDLKQASR. A coiled-coil region spans residues 806–865; sequence LKRRNAWREDEREKKQQDVENLKKFLLSKKPHVVAVSGENRDAHMVMEDIKRTISELEQN. In terms of domain architecture, S1 motif spans 1204–1273; sequence WNHFDSGSCP…EKFNVDLTCR (70 aa). The SH2 domain maps to 1316–1426; it reads YIKRVIAHPS…LLGHKYFHEC (111 aa). Thr1522 carries the post-translational modification Phosphothreonine. The residue at position 1525 (Ser1525) is a Phosphoserine. Positions 1611 to 1627 are enriched in polar residues; the sequence is LMTPSYSYTTPGQQQAM. The segment at 1611-1726 is disordered; that stretch reads LMTPSYSYTT…ATPLLDEMDR (116 aa). 2 stretches are compositionally biased toward low complexity: residues 1628–1640 and 1647–1656; these read TTPQ…PQSS and SSSTPSSSSS. Over residues 1657–1669 the composition is skewed to polar residues; that stretch reads RVRTPQPKASSHT.

Belongs to the SPT6 family.

It is found in the nucleus. Its function is as follows. Histone H3-H4 chaperone that plays a role in maintenance of chromatin structure during RNA polymerase II transcription elongation. Promotes the activation of the myogenic gene program by entailing erasure of the repressive H3K27me3 epigenetic mark through stabilization of the chromatin interaction of the H3K27 demethylase KDM6A. Plays an important role during early patterning and somitogenesis of the embryo. The sequence is that of Transcription elongation factor SPT6 (supt6h) from Danio rerio (Zebrafish).